We begin with the raw amino-acid sequence, 220 residues long: 7-cyano-7-deazaguanine synthase (220 aa).

11–21 (VSGGMDSVTLM) is an ATP binding site. Zn(2+) is bound by residues C186, C194, C197, and C200.

It belongs to the QueC family. Requires Zn(2+) as cofactor.

It catalyses the reaction 7-carboxy-7-deazaguanine + NH4(+) + ATP = 7-cyano-7-deazaguanine + ADP + phosphate + H2O + H(+). It functions in the pathway purine metabolism; 7-cyano-7-deazaguanine biosynthesis. Functionally, catalyzes the ATP-dependent conversion of 7-carboxy-7-deazaguanine (CDG) to 7-cyano-7-deazaguanine (preQ(0)). The chain is 7-cyano-7-deazaguanine synthase from Porphyromonas gingivalis (strain ATCC BAA-308 / W83).